Reading from the N-terminus, the 290-residue chain is uncharacterized protein (290 aa).

3 disordered regions span residues 89–157, 172–217, and 261–290; these read CSEN…EELS, MANT…MESS, and TANT…AVKK. Composition is skewed to basic and acidic residues over residues 106 to 124 and 142 to 152; these read DFSK…EKQP and KTEKLVSKEPS. 2 stretches are compositionally biased toward polar residues: residues 172 to 183 and 193 to 202; these read MANTSSSANRTG and KPTTAVQAST. 2 stretches are compositionally biased toward low complexity: residues 207-217 and 274-290; these read MSSAESAMESS and PSSE…AVKK.

This is an uncharacterized protein from Caenorhabditis elegans.